Consider the following 381-residue polypeptide: Cytochrome b (381 aa).

4 consecutive transmembrane segments (helical) span residues 34-54 (FGSL…FLAM), 78-99 (WLIR…YLHI), 114-134 (WNIG…GYVL), and 179-199 (FFAF…IHLL). Histidine 84 and histidine 98 together coordinate heme b. Heme b contacts are provided by histidine 183 and histidine 197. An a ubiquinone-binding site is contributed by histidine 202. A run of 4 helical transmembrane segments spans residues 227-247 (YKDI…TLFI), 289-309 (LGGV…PLLQ), 321-341 (MTQI…WIGG), and 348-368 (FIMV…IIIP).

It belongs to the cytochrome b family. As to quaternary structure, the cytochrome bc1 complex contains 3 respiratory subunits (MT-CYB, CYC1 and UQCRFS1), 2 core proteins (UQCRC1 and UQCRC2) and probably 6 low-molecular weight proteins. The cofactor is heme b.

It localises to the mitochondrion inner membrane. Functionally, component of the ubiquinol-cytochrome c reductase complex (complex III or cytochrome b-c1 complex) that is part of the mitochondrial respiratory chain. The b-c1 complex mediates electron transfer from ubiquinol to cytochrome c. Contributes to the generation of a proton gradient across the mitochondrial membrane that is then used for ATP synthesis. In Galeocerdo cuvier (Tiger shark), this protein is Cytochrome b (mt-cyb).